A 216-amino-acid chain; its full sequence is Uracil phosphoribosyltransferase (216 aa).

30–34 (KNLVK) provides a ligand contact to GTP. 5-phospho-alpha-D-ribose 1-diphosphate contacts are provided by residues Arg-80, Arg-105, and 140 to 148 (DPMIATGST). Residues Ile-203 and 208–210 (GDA) each bind uracil. Position 209 (Asp-209) interacts with 5-phospho-alpha-D-ribose 1-diphosphate.

The protein belongs to the UPRTase family. Requires Mg(2+) as cofactor.

The enzyme catalyses UMP + diphosphate = 5-phospho-alpha-D-ribose 1-diphosphate + uracil. It participates in pyrimidine metabolism; UMP biosynthesis via salvage pathway; UMP from uracil: step 1/1. Its activity is regulated as follows. Allosterically activated by GTP. Functionally, catalyzes the conversion of uracil and 5-phospho-alpha-D-ribose 1-diphosphate (PRPP) to UMP and diphosphate. The polypeptide is Uracil phosphoribosyltransferase (Sulfolobus acidocaldarius (strain ATCC 33909 / DSM 639 / JCM 8929 / NBRC 15157 / NCIMB 11770)).